Reading from the N-terminus, the 179-residue chain is Large ribosomal subunit protein uL5 (179 aa).

The protein belongs to the universal ribosomal protein uL5 family. In terms of assembly, part of the 50S ribosomal subunit; part of the 5S rRNA/L5/L18/L25 subcomplex. Contacts the 5S rRNA and the P site tRNA. Forms a bridge to the 30S subunit in the 70S ribosome.

Its function is as follows. This is one of the proteins that bind and probably mediate the attachment of the 5S RNA into the large ribosomal subunit, where it forms part of the central protuberance. In the 70S ribosome it contacts protein S13 of the 30S subunit (bridge B1b), connecting the 2 subunits; this bridge is implicated in subunit movement. Contacts the P site tRNA; the 5S rRNA and some of its associated proteins might help stabilize positioning of ribosome-bound tRNAs. In Delftia acidovorans (strain DSM 14801 / SPH-1), this protein is Large ribosomal subunit protein uL5.